A 529-amino-acid chain; its full sequence is Probable pectinesterase/pectinesterase inhibitor 35 (529 aa).

A signal peptide spans 1-34 (MATTSFSLPNHKFGIKLMLFLVLNLLSLQTSVFA). Positions 36–180 (SSNSKFTKIS…TGLLTNSLDM (145 aa)) are pectinesterase inhibitor 35. The tract at residues 42–64 (TKISRHPNSDSSSRTKPSTSSNK) is disordered. Positions 50–64 (SDSSSRTKPSTSSNK) are enriched in low complexity. Asn-86, Asn-169, and Asn-193 each carry an N-linked (GlcNAc...) asparagine glycan. A pectinesterase 35 region spans residues 228 to 514 (HAVVAADGSG…FTVSGFIDGN (287 aa)). 2 residues coordinate substrate: Thr-302 and Gln-332. Asp-355 (proton donor; for pectinesterase activity) is an active-site residue. Asp-376 serves as the catalytic Nucleophile; for pectinesterase activity. Substrate is bound by residues Arg-434 and Trp-436.

It in the N-terminal section; belongs to the PMEI family. This sequence in the C-terminal section; belongs to the pectinesterase family. Expressed in siliques.

Its subcellular location is the secreted. It is found in the cell wall. It carries out the reaction [(1-&gt;4)-alpha-D-galacturonosyl methyl ester](n) + n H2O = [(1-&gt;4)-alpha-D-galacturonosyl](n) + n methanol + n H(+). The protein operates within glycan metabolism; pectin degradation; 2-dehydro-3-deoxy-D-gluconate from pectin: step 1/5. In terms of biological role, acts in the modification of cell walls via demethylesterification of cell wall pectin. The protein is Probable pectinesterase/pectinesterase inhibitor 35 (PME35) of Arabidopsis thaliana (Mouse-ear cress).